Reading from the N-terminus, the 487-residue chain is Polyamine oxidase 4 (487 aa).

4 residues coordinate FAD: Glu53, Arg61, Val242, and Glu429. The short motif at 485–487 is the Microbody targeting signal element; that stretch reads CRT.

The protein belongs to the flavin monoamine oxidase family. It depends on FAD as a cofactor. Widely expressed.

The protein localises to the peroxisome. The enzyme catalyses spermine + O2 + H2O = 3-aminopropanal + spermidine + H2O2. The catalysed reaction is norspermine + O2 + H2O = norspermidine + 3-aminopropanal + H2O2. It carries out the reaction thermospermine + O2 + H2O = 3-aminopropanal + spermidine + H2O2. It participates in amine and polyamine degradation; spermine degradation. Its function is as follows. Flavoenzyme involved in polyamine back-conversion. Catalyzes the oxidation of the secondary amino group of polyamines, such as spermine. Substrate preference is spermine &gt; thermospermine &gt; norspermine. No activity detected when putrescine, spermidine or N(1)-acetylspermidine are used as substrates. Plays an important role in the regulation of polyamine intracellular concentration. This is Polyamine oxidase 4 from Oryza sativa subsp. japonica (Rice).